We begin with the raw amino-acid sequence, 236 residues long: tRNA (guanine-N(7)-)-methyltransferase (236 aa).

A compositionally biased stretch (basic and acidic residues) spans 1–17 (MSERKSDPDRDDSERAF). Residues 1-23 (MSERKSDPDRDDSERAFFGRRKG) form a disordered region. E67, E92, D119, and D141 together coordinate S-adenosyl-L-methionine. The active site involves D141. Substrate-binding residues include K145 and D177.

The protein belongs to the class I-like SAM-binding methyltransferase superfamily. TrmB family.

The catalysed reaction is guanosine(46) in tRNA + S-adenosyl-L-methionine = N(7)-methylguanosine(46) in tRNA + S-adenosyl-L-homocysteine. It functions in the pathway tRNA modification; N(7)-methylguanine-tRNA biosynthesis. In terms of biological role, catalyzes the formation of N(7)-methylguanine at position 46 (m7G46) in tRNA. The protein is tRNA (guanine-N(7)-)-methyltransferase of Bradyrhizobium diazoefficiens (strain JCM 10833 / BCRC 13528 / IAM 13628 / NBRC 14792 / USDA 110).